Reading from the N-terminus, the 161-residue chain is 6,7-dimethyl-8-ribityllumazine synthase (161 aa).

Residues Trp31, 65–67, and 89–91 each bind 5-amino-6-(D-ribitylamino)uracil; these read TFE and CVV. (2S)-2-hydroxy-3-oxobutyl phosphate is bound at residue 94-95; the sequence is DT. Residue His97 is the Proton donor of the active site. Phe122 lines the 5-amino-6-(D-ribitylamino)uracil pocket. Arg136 provides a ligand contact to (2S)-2-hydroxy-3-oxobutyl phosphate.

The protein belongs to the DMRL synthase family.

The enzyme catalyses (2S)-2-hydroxy-3-oxobutyl phosphate + 5-amino-6-(D-ribitylamino)uracil = 6,7-dimethyl-8-(1-D-ribityl)lumazine + phosphate + 2 H2O + H(+). The protein operates within cofactor biosynthesis; riboflavin biosynthesis; riboflavin from 2-hydroxy-3-oxobutyl phosphate and 5-amino-6-(D-ribitylamino)uracil: step 1/2. Catalyzes the formation of 6,7-dimethyl-8-ribityllumazine by condensation of 5-amino-6-(D-ribitylamino)uracil with 3,4-dihydroxy-2-butanone 4-phosphate. This is the penultimate step in the biosynthesis of riboflavin. The chain is 6,7-dimethyl-8-ribityllumazine synthase from Porphyromonas gingivalis (strain ATCC 33277 / DSM 20709 / CIP 103683 / JCM 12257 / NCTC 11834 / 2561).